Reading from the N-terminus, the 912-residue chain is DNA ligase 4 (912 aa).

Residues Glu-271, Thr-272, Lys-273, Leu-274, Arg-278, Glu-331, Lys-345, Phe-367, Glu-427, Lys-432, Lys-449, and Lys-451 each contribute to the ATP site. Residue Lys-273 is the N6-AMP-lysine intermediate of the active site. Residue Glu-331 participates in Mg(2+) binding. Mg(2+) is bound at residue Glu-427. The segment at 610–620 (LATKHLHVGDD) is required for catalytic activity. 2 BRCT domains span residues 654 to 743 (KVSN…PRFM) and 846 to 912 (LRFH…QYLL).

Belongs to the ATP-dependent DNA ligase family. In terms of assembly, interacts with XRCC4; the LIG4-XRCC4 subcomplex has a 1:2 stoichiometry and XRCC4 is required for LIG4 stability. Component of the core long-range non-homologous end joining (NHEJ) complex (also named DNA-PK complex) composed of PRKDC, LIG4, XRCC4, XRCC6/Ku70, XRCC5/Ku86 and NHEJ1/XLF. Additional component of the NHEJ complex includes PAXX. Following autophosphorylation, PRKDC dissociates from DNA, leading to formation of the short-range NHEJ complex, composed of LIG4, XRCC4, XRCC6/Ku70, XRCC5/Ku86 and NHEJ1/XLF. Interacts with DCLRE1C; the interaction is direct. Interacts with APLF. It depends on Mg(2+) as a cofactor.

The protein resides in the nucleus. The enzyme catalyses ATP + (deoxyribonucleotide)n-3'-hydroxyl + 5'-phospho-(deoxyribonucleotide)m = (deoxyribonucleotide)n+m + AMP + diphosphate.. DNA ligase involved in DNA non-homologous end joining (NHEJ); required for double-strand break (DSB) repair and V(D)J recombination. Catalyzes the NHEJ ligation step of the broken DNA during DSB repair by resealing the DNA breaks after the gap filling is completed. Joins single-strand breaks in a double-stranded polydeoxynucleotide in an ATP-dependent reaction. LIG4 is mechanistically flexible: it can ligate nicks as well as compatible DNA overhangs alone, while in the presence of XRCC4, it can ligate ends with 2-nucleotides (nt) microhomology and 1-nt gaps. Forms a subcomplex with XRCC4; the LIG4-XRCC4 subcomplex is responsible for the NHEJ ligation step and XRCC4 enhances the joining activity of LIG4. Binding of the LIG4-XRCC4 complex to DNA ends is dependent on the assembly of the DNA-dependent protein kinase complex DNA-PK to these DNA ends. LIG4 regulates nuclear localization of XRCC4. This chain is DNA ligase 4, found in Cricetulus griseus (Chinese hamster).